The following is a 695-amino-acid chain: Variediene synthase (695 aa).

The disordered stretch occupies residues Met1–Gln23. Positions Ser7–Glu332 are terpene cyclase. Position 98 (Asp98) interacts with Mg(2+). Substrate-binding positions include Asp98, Arg184–Asp187, Asn228, Ser232–Glu236, and Arg324–Tyr325. A DDXXD 1 motif is present at residues Asp98–Glu102. The NSE/DTE signature appears at Asn228–Glu236. A disordered region spans residues Arg353–Pro392. The span at Ser357–Ser385 shows a compositional bias: low complexity. Lys415, Arg418, and His447 together coordinate isopentenyl diphosphate. 2 residues coordinate Mg(2+): Asp454 and Asp458. The DDXXD 2 motif lies at Asp454 to Asp458. Arg463 serves as a coordination point for dimethylallyl diphosphate. Arg464 serves as a coordination point for isopentenyl diphosphate. Residues Lys541, Thr542, Gln579, Asn586, Lys595, and Lys605 each coordinate dimethylallyl diphosphate.

It in the N-terminal section; belongs to the terpene synthase family. In the C-terminal section; belongs to the FPP/GGPP synthase family. As to quaternary structure, hexamer. The cofactor is Mg(2+).

It catalyses the reaction isopentenyl diphosphate + (2E,6E)-farnesyl diphosphate = (2E,6E,10E)-geranylgeranyl diphosphate + diphosphate. It carries out the reaction (2E,6E,10E)-geranylgeranyl diphosphate = variediene + diphosphate. It functions in the pathway secondary metabolite biosynthesis; terpenoid biosynthesis. Its function is as follows. Bifunctional terpene synthase converts DMAPP and IPP, and also GGPP, into variediene as a single product. The C-terminal prenyltransferase domain of AbVS catalyzes formation of GGPP, whereas the N-terminal terpene cyclase domain catalyzes the cyclization of GGPP to variediene. This Aspergillus brasiliensis (strain CBS 101740 / IMI 381727 / IBT 21946) protein is Variediene synthase.